We begin with the raw amino-acid sequence, 272 residues long: Glutamate racemase (272 aa).

Substrate contacts are provided by residues 9 to 10 (DS) and 41 to 42 (YG). The active-site Proton donor/acceptor is the Cys-73. Residue 74–75 (NT) coordinates substrate. Cys-183 (proton donor/acceptor) is an active-site residue. 184–185 (TH) contributes to the substrate binding site.

The protein belongs to the aspartate/glutamate racemases family.

The enzyme catalyses L-glutamate = D-glutamate. It participates in cell wall biogenesis; peptidoglycan biosynthesis. Its function is as follows. Provides the (R)-glutamate required for cell wall biosynthesis. The chain is Glutamate racemase from Shewanella sp. (strain MR-4).